A 101-amino-acid polypeptide reads, in one-letter code: MKKTLLHYLIFSCLLALVLVGFVYASSPIDKKQYMTVTVASGDTLWGLAKQYEPAHGLSPDEFIRWVVDVNRLPSSRLTAGEQIVIPVLKSKQDGSLAVKR.

One can recognise a LysM domain in the interval 35–86; that stretch reads MTVTVASGDTLWGLAKQYEPAHGLSPDEFIRWVVDVNRLPSSRLTAGEQIVI.

It belongs to the YneA family.

Its subcellular location is the cytoplasm. Its function is as follows. Inhibits cell division during the SOS response. Affects a later stage of the cell division protein assembly, after the assembly of the Z ring, by probably suppressing recruitment of FtsL and/or DivIC to the division machinery. The chain is Cell division suppressor protein YneA from Geobacillus thermodenitrificans (strain NG80-2).